A 154-amino-acid chain; its full sequence is Protein-export protein SecB (154 aa).

This sequence belongs to the SecB family. As to quaternary structure, homotetramer, a dimer of dimers. One homotetramer interacts with 1 SecA dimer.

It localises to the cytoplasm. Its function is as follows. One of the proteins required for the normal export of preproteins out of the cell cytoplasm. It is a molecular chaperone that binds to a subset of precursor proteins, maintaining them in a translocation-competent state. It also specifically binds to its receptor SecA. The protein is Protein-export protein SecB of Vibrio parahaemolyticus serotype O3:K6 (strain RIMD 2210633).